The chain runs to 57 residues: Large ribosomal subunit protein bL32 (57 aa).

A compositionally biased stretch (basic residues) spans 1–19; it reads MAVPKRRMSRANTRSRRAQ. The disordered stretch occupies residues 1–20; it reads MAVPKRRMSRANTRSRRAQW.

It belongs to the bacterial ribosomal protein bL32 family.

The polypeptide is Large ribosomal subunit protein bL32 (Mycobacterium avium (strain 104)).